The primary structure comprises 449 residues: Glucose-6-phosphate isomerase (449 aa).

The Proton donor role is filled by E291. Residues H312 and K426 contribute to the active site.

The protein belongs to the GPI family.

Its subcellular location is the cytoplasm. The enzyme catalyses alpha-D-glucose 6-phosphate = beta-D-fructose 6-phosphate. Its pathway is carbohydrate biosynthesis; gluconeogenesis. It participates in carbohydrate degradation; glycolysis; D-glyceraldehyde 3-phosphate and glycerone phosphate from D-glucose: step 2/4. Catalyzes the reversible isomerization of glucose-6-phosphate to fructose-6-phosphate. The sequence is that of Glucose-6-phosphate isomerase from Streptococcus pyogenes serotype M5 (strain Manfredo).